We begin with the raw amino-acid sequence, 314 residues long: Leucotoxin LukE (314 aa).

A signal peptide spans Met1–Ala28.

The protein belongs to the aerolysin family. In terms of assembly, toxicity requires sequential binding and synergistic association of a class S and a class F component which form heterooligomeric complexes. LukE (class S) associates with LukD (class F). LukE can also associate with HlgB.

The protein localises to the secreted. Its function is as follows. Part of a bi-component leucotoxin that acts by forming pores in the membrane of the target cells. LukE-LukD is as effective as the Panton-Valentine leucocidin (PVL) for inducing dermonecrosis when injected in the rabbit skin, but not hemolytic and poorly leucotoxic on human blood cells compared to other leucotoxins expressed by S.aureus. This is Leucotoxin LukE (lukE) from Staphylococcus aureus.